A 430-amino-acid polypeptide reads, in one-letter code: Phosphomethylpyrimidine synthase (430 aa).

Substrate is bound by residues asparagine 67, methionine 96, tyrosine 125, histidine 161, 183–185, 224–227, and glutamate 263; these read SRG and DALR. Histidine 267 lines the Zn(2+) pocket. Tyrosine 290 is a binding site for substrate. Histidine 331 serves as a coordination point for Zn(2+). Positions 406, 409, and 413 each coordinate [4Fe-4S] cluster.

Belongs to the ThiC family. As to quaternary structure, homodimer. [4Fe-4S] cluster is required as a cofactor.

It catalyses the reaction 5-amino-1-(5-phospho-beta-D-ribosyl)imidazole + S-adenosyl-L-methionine = 4-amino-2-methyl-5-(phosphooxymethyl)pyrimidine + CO + 5'-deoxyadenosine + formate + L-methionine + 3 H(+). It participates in cofactor biosynthesis; thiamine diphosphate biosynthesis. Catalyzes the synthesis of the hydroxymethylpyrimidine phosphate (HMP-P) moiety of thiamine from aminoimidazole ribotide (AIR) in a radical S-adenosyl-L-methionine (SAM)-dependent reaction. The sequence is that of Phosphomethylpyrimidine synthase from Campylobacter jejuni subsp. jejuni serotype O:23/36 (strain 81-176).